The sequence spans 831 residues: Zinc phosphodiesterase ELAC protein 2 (831 aa).

The transit peptide at 1–16 (MWALRSLLRPLGLRTM) directs the protein to the mitochondrion. 2 disordered regions span residues 15-47 (TMSQ…PGGP) and 179-227 (SERR…ANRK). A compositionally biased stretch (polar residues) spans 186–212 (QQPSQSPRTSPNRLSPKQSSDSGSAEN). Phosphoserine occurs at positions 191, 195, 200, 204, and 732. Positions 791-831 (LTQQADSPEDREPQQKRAHTDEPHSPQSKKESVANTLGARV) are disordered. Position 792 is a phosphothreonine (T792). A phosphoserine mark is found at S797 and S815. Residues 798 to 822 (PEDREPQQKRAHTDEPHSPQSKKES) are compositionally biased toward basic and acidic residues.

Belongs to the RNase Z family. As to quaternary structure, homodimer. Interacts with PTCD1. Zn(2+) serves as cofactor.

The protein resides in the mitochondrion. It localises to the mitochondrion matrix. Its subcellular location is the mitochondrion nucleoid. It is found in the nucleus. It carries out the reaction Endonucleolytic cleavage of RNA, removing extra 3' nucleotides from tRNA precursor, generating 3' termini of tRNAs. A 3'-hydroxy group is left at the tRNA terminus and a 5'-phosphoryl group is left at the trailer molecule.. Functionally, zinc phosphodiesterase, which displays mitochondrial tRNA 3'-processing endonuclease activity. Involved in tRNA maturation, by removing a 3'-trailer from precursor tRNA. Associates with mitochondrial DNA complexes at the nucleoids to initiate RNA processing and ribosome assembly. The sequence is that of Zinc phosphodiesterase ELAC protein 2 (Elac2) from Mus musculus (Mouse).